The sequence spans 314 residues: Splicing factor YJU2 (314 aa).

Cys-43, Cys-46, Cys-80, and Cys-83 together coordinate Zn(2+). Disordered regions lie at residues 178-238 (MSQE…NEVP) and 253-314 (LAGL…DSDS). Residues 200 to 209 (EEARHRRLLE) are compositionally biased toward basic and acidic residues. A phosphoserine mark is found at Ser-211, Ser-213, and Ser-220. A compositionally biased stretch (low complexity) spans 222–232 (PRAAARPNPTA). The span at 290–302 (PTPQTPGTSSLSQ) shows a compositional bias: polar residues. Ser-309, Ser-312, and Ser-314 each carry phosphoserine.

It belongs to the CWC16 family. YJU2 subfamily. Component of the spliceosome. Present in the activated B complex, the catalytically activated B* complex which catalyzes the branching, the catalytic step 1 C complex catalyzing the exon ligation, and the postcatalytic P complex containing the ligated exons (mRNA) and the excised lariat intron.

It is found in the nucleus. In terms of biological role, part of the spliceosome which catalyzes two sequential transesterification reactions, first the excision of the non-coding intron from pre-mRNA and then the ligation of the coding exons to form the mature mRNA. Plays a role in stabilizing the structure of the spliceosome catalytic core and docking of the branch helix into the active site, producing 5'-exon and lariat intron-3'-intermediates. May protect cells from TP53-dependent apoptosis upon dsDNA break damage through association with PRP19-CD5L complex. In Mus musculus (Mouse), this protein is Splicing factor YJU2.